Consider the following 199-residue polypeptide: Peptidyl-tRNA hydrolase (199 aa).

Tyr18 is a binding site for tRNA. The active-site Proton acceptor is His23. TRNA-binding residues include Tyr72, Asn74, and Asn120.

Belongs to the PTH family. Monomer.

The protein localises to the cytoplasm. The enzyme catalyses an N-acyl-L-alpha-aminoacyl-tRNA + H2O = an N-acyl-L-amino acid + a tRNA + H(+). In terms of biological role, hydrolyzes ribosome-free peptidyl-tRNAs (with 1 or more amino acids incorporated), which drop off the ribosome during protein synthesis, or as a result of ribosome stalling. Catalyzes the release of premature peptidyl moieties from peptidyl-tRNA molecules trapped in stalled 50S ribosomal subunits, and thus maintains levels of free tRNAs and 50S ribosomes. The sequence is that of Peptidyl-tRNA hydrolase from Bifidobacterium adolescentis (strain ATCC 15703 / DSM 20083 / NCTC 11814 / E194a).